The chain runs to 423 residues: p-aminobenzoyl-glutamate hydrolase subunit A homolog (423 aa).

It belongs to the peptidase M20 family. Mn(2+) is required as a cofactor.

Its function is as follows. Catalyzes the cleavage of p-aminobenzoyl-glutamate (PABA-GLU) to form p-aminobenzoate (PABA) and glutamate. This is p-aminobenzoyl-glutamate hydrolase subunit A homolog (abgA) from Haemophilus influenzae (strain ATCC 51907 / DSM 11121 / KW20 / Rd).